The following is a 331-amino-acid chain: Aromatic 2-oxoacid reductase (331 aa).

Residues 154–155 (RI), Asp-175, 205–206 (AP), Asn-211, 232–234 (AAR), and Asp-258 each bind NAD(+). Residue Arg-234 is part of the active site. The active site involves Glu-263. Residue His-295 is the Proton donor of the active site.

This sequence belongs to the D-isomer specific 2-hydroxyacid dehydrogenase family.

It carries out the reaction (R)-3-phenyllactate + NAD(+) = 3-phenylpyruvate + NADH + H(+). The catalysed reaction is (2R)-2-hydroxy-3-(4-hydroxyphenyl)propanoate + NAD(+) = 3-(4-hydroxyphenyl)pyruvate + NADH + H(+). It catalyses the reaction 3-(indol-3-yl)lactate + NAD(+) = indole-3-pyruvate + NADH + H(+). Its pathway is amino-acid degradation. Functionally, essential for the reductive metabolism of L-phenylalanine, L-tyrosine and L-tryptophan. Catalyzes the conversion of phenylpyruvic acid to phenyllactic acid, 4-hydroxy-phenylpyruvic acid to 4-hydroxy-phenyllactic acid, and indolepyruvic acid to indolelactic acid. The chain is Aromatic 2-oxoacid reductase from Clostridium sporogenes (strain ATCC 15579).